We begin with the raw amino-acid sequence, 492 residues long: Aspartyl/glutamyl-tRNA(Asn/Gln) amidotransferase subunit B (492 aa).

Belongs to the GatB/GatE family. GatB subfamily. In terms of assembly, heterotrimer of A, B and C subunits.

The enzyme catalyses L-glutamyl-tRNA(Gln) + L-glutamine + ATP + H2O = L-glutaminyl-tRNA(Gln) + L-glutamate + ADP + phosphate + H(+). The catalysed reaction is L-aspartyl-tRNA(Asn) + L-glutamine + ATP + H2O = L-asparaginyl-tRNA(Asn) + L-glutamate + ADP + phosphate + 2 H(+). In terms of biological role, allows the formation of correctly charged Asn-tRNA(Asn) or Gln-tRNA(Gln) through the transamidation of misacylated Asp-tRNA(Asn) or Glu-tRNA(Gln) in organisms which lack either or both of asparaginyl-tRNA or glutaminyl-tRNA synthetases. The reaction takes place in the presence of glutamine and ATP through an activated phospho-Asp-tRNA(Asn) or phospho-Glu-tRNA(Gln). The polypeptide is Aspartyl/glutamyl-tRNA(Asn/Gln) amidotransferase subunit B (Bradyrhizobium diazoefficiens (strain JCM 10833 / BCRC 13528 / IAM 13628 / NBRC 14792 / USDA 110)).